A 275-amino-acid polypeptide reads, in one-letter code: Fructose-2,6-bisphosphatase TIGAR (275 aa).

Residue histidine 11 is the Tele-phosphohistidine intermediate of the active site. Catalysis depends on glutamate 89, which acts as the Proton donor/acceptor.

It belongs to the phosphoglycerate mutase family.

The protein resides in the cytoplasm. It is found in the nucleus. The protein localises to the mitochondrion. The enzyme catalyses beta-D-fructose 2,6-bisphosphate + H2O = beta-D-fructose 6-phosphate + phosphate. Functionally, fructose-bisphosphatase hydrolyzing fructose-2,6-bisphosphate as well as fructose-1,6-bisphosphate. Acts as a negative regulator of glycolysis by lowering intracellular levels of fructose-2,6-bisphosphate in a p53/TP53-dependent manner, resulting in the pentose phosphate pathway (PPP) activation and NADPH production. Contributes to the generation of reduced glutathione to cause a decrease in intracellular reactive oxygen species (ROS) content, correlating with its ability to protect cells from oxidative or metabolic stress-induced cell death. May play a role in mitophagy inhibition. The polypeptide is Fructose-2,6-bisphosphatase TIGAR (Xenopus laevis (African clawed frog)).